The chain runs to 239 residues: Ribosomal RNA large subunit methyltransferase E (239 aa).

S-adenosyl-L-methionine is bound by residues Gly81, Trp83, Asp104, Asp120, and Asp144. Lys184 (proton acceptor) is an active-site residue.

It belongs to the class I-like SAM-binding methyltransferase superfamily. RNA methyltransferase RlmE family.

It localises to the cytoplasm. It catalyses the reaction uridine(2552) in 23S rRNA + S-adenosyl-L-methionine = 2'-O-methyluridine(2552) in 23S rRNA + S-adenosyl-L-homocysteine + H(+). In terms of biological role, specifically methylates the uridine in position 2552 of 23S rRNA at the 2'-O position of the ribose in the fully assembled 50S ribosomal subunit. This is Ribosomal RNA large subunit methyltransferase E from Rhizobium rhizogenes (strain K84 / ATCC BAA-868) (Agrobacterium radiobacter).